The chain runs to 300 residues: MEKYTNWRDNGTGIAPFLPNTIRKPSKVMTACLLGILGVKTIIMLPLIMLYLLTGQNNLLGLILKFTFSWKEEITVQGIKKRDVRKSKHYPQKGKLYICNCTSPLDAFSVVLLAQGPVTLLVPSNDIVYKVSIREFINFILAGGLDIKLYGHEVAELSQLGNTVNFMFAEGTSCNGKSVLPFSITGKKLKEFIDPSITTMNPAMAKTKKFELQTIQIKTNKTAITTLPISNMEYLSRFLNKGINVKCKINEPQVLSDNLEELRVALNGGDKYKLVSRKLDVESKRNFVKEYISDQRKKRK.

Residues 33–53 (LLGILGVKTIIMLPLIMLYLL) form a helical membrane-spanning segment. Positions 101–106 (CTSPLD) match the HXXXXD motif motif.

It belongs to the 1-acyl-sn-glycerol-3-phosphate acyltransferase family.

It is found in the lipid droplet. It localises to the endoplasmic reticulum membrane. It carries out the reaction a 1-acyl-sn-glycero-3-phosphate + an acyl-CoA = a 1,2-diacyl-sn-glycero-3-phosphate + CoA. It catalyses the reaction 1-hexadecanoyl-sn-glycero-3-phosphate + (9Z)-octadecenoyl-CoA = 1-hexadecanoyl-2-(9Z-octadecenoyl)-sn-glycero-3-phosphate + CoA. In terms of biological role, acyl-CoA-dependent lysophosphatidic acid acyltransferase with preference for oleoyl-CoA. Involved in triacylglyceride homeostasis and lipid droplet formation. Involved in vacuolar protein sorting. The protein is Lysophosphatidic acid:oleoyl-CoA acyltransferase 1 of Saccharomyces cerevisiae (strain ATCC 204508 / S288c) (Baker's yeast).